The following is a 235-amino-acid chain: Orotidine 5'-phosphate decarboxylase (235 aa).

Residues Asp17, Lys39, 66-75 (DLKLHDIGNT), Thr121, Arg182, Gln191, Gly211, and Arg212 contribute to the substrate site. Residue Lys68 is the Proton donor of the active site.

It belongs to the OMP decarboxylase family. Type 1 subfamily. As to quaternary structure, homodimer.

It catalyses the reaction orotidine 5'-phosphate + H(+) = UMP + CO2. It participates in pyrimidine metabolism; UMP biosynthesis via de novo pathway; UMP from orotate: step 2/2. Functionally, catalyzes the decarboxylation of orotidine 5'-monophosphate (OMP) to uridine 5'-monophosphate (UMP). The chain is Orotidine 5'-phosphate decarboxylase from Rhodopseudomonas palustris (strain BisB5).